We begin with the raw amino-acid sequence, 254 residues long: N-acetylglucosamine-induced protein 1 (254 aa).

The protein localises to the cytoplasm. Functionally, N-acetylglucosamine-induced protein which plays a role in the N-acetylglucosamine metabolic pathway. The chain is N-acetylglucosamine-induced protein 1 from Candida albicans (strain SC5314 / ATCC MYA-2876) (Yeast).